We begin with the raw amino-acid sequence, 354 residues long: Phosphoribosylformylglycinamidine cyclo-ligase (354 aa).

Belongs to the AIR synthase family.

It is found in the cytoplasm. It carries out the reaction 2-formamido-N(1)-(5-O-phospho-beta-D-ribosyl)acetamidine + ATP = 5-amino-1-(5-phospho-beta-D-ribosyl)imidazole + ADP + phosphate + H(+). Its pathway is purine metabolism; IMP biosynthesis via de novo pathway; 5-amino-1-(5-phospho-D-ribosyl)imidazole from N(2)-formyl-N(1)-(5-phospho-D-ribosyl)glycinamide: step 2/2. The sequence is that of Phosphoribosylformylglycinamidine cyclo-ligase from Synechococcus sp. (strain JA-2-3B'a(2-13)) (Cyanobacteria bacterium Yellowstone B-Prime).